The sequence spans 429 residues: Cyclin-B2-1 (429 aa).

It belongs to the cyclin family. Cyclin AB subfamily. As to quaternary structure, interacts with CDC20-1 and CDC20-2. Expressed in roots, stems, leaves, flowers and siliques.

The chain is Cyclin-B2-1 (CYCB2-1) from Arabidopsis thaliana (Mouse-ear cress).